Reading from the N-terminus, the 334-residue chain is Mucin-15 (334 aa).

An N-terminal signal peptide occupies residues 1 to 23 (MLALAKILLISTLFYSLLSGSHG). Residues 24–236 (KENQDINTTQ…SDPQKENRNT (213 aa)) lie on the Extracellular side of the membrane. Residues asparagine 30, asparagine 61, asparagine 79, asparagine 90, asparagine 148, asparagine 155, asparagine 163, asparagine 218, and asparagine 225 are each glycosylated (N-linked (GlcNAc...) asparagine). A disordered region spans residues 64–104 (TSNLKASHSPPLNLPNNSHGITDFSSNSSAEHSLGSLKPTS). Residues 77–94 (LPNNSHGITDFSSNSSAE) show a composition bias toward polar residues. The chain crosses the membrane as a helical span at residues 237 to 257 (GIVFGAILGAILGVSLLTLVG). Over 258 to 334 (YLLCGKRKTD…DDIPPLRTSV (77 aa)) the chain is Cytoplasmic. The segment at 304–334 (PTLNDSAMPESEENARDGIPMDDIPPLRTSV) is disordered.

Post-translationally, highly glycosylated (N- and O-linked carbohydrates). In terms of tissue distribution, expressed in spleen, thymus, prostate, testis, ovary, small intestine, colon, peripheral blood leukocyte, bone marrow, lymph node and lung.

The protein resides in the cell membrane. It localises to the secreted. In terms of biological role, may play a role in the cell adhesion to the extracellular matrix. The sequence is that of Mucin-15 (MUC15) from Homo sapiens (Human).